Here is a 1370-residue protein sequence, read N- to C-terminus: Putative Polycomb group protein ASXL2 (1370 aa).

One can recognise an HTH HARE-type domain in the interval 11-86 (RTWAEAAKTV…RMGVYTLKKD (76 aa)). Positions 92 to 216 (KELSECSEES…DSVPAKPGQM (125 aa)) are disordered. Low complexity predominate over residues 103 to 120 (DGQSDSHSSDNSSSSDGG). The segment covering 141 to 152 (PPSPPSGCPSPT) has biased composition (pro residues). Ser150 bears the Phosphoserine mark. The Nuclear localization signal signature appears at 178-182 (QQKKK). Over residues 186 to 198 (CRPSMSISNQHLS) the composition is skewed to polar residues. Residues 229-338 (PDSILVNTNL…FENYYGQSSG (110 aa)) form the DEUBAD domain. The LXXLL motif signature appears at 258–262 (LLLLL). Disordered regions lie at residues 340 to 487 (SLED…AGLQ) and 516 to 535 (QESLKRKSSLTDEEATSSWE). The segment covering 398-412 (QKEENQDEARPDSKS) has biased composition (basic and acidic residues). Phosphoserine is present on residues Ser477, Ser524, Ser553, and Ser590. The residue at position 594 (Arg594) is an Asymmetric dimethylarginine. Residue Ser601 is modified to Phosphoserine. A compositionally biased stretch (gly residues) spans 643-652 (IPGPGPGGGQ). 3 disordered regions span residues 643 to 734 (IPGP…LASS), 805 to 891 (PKAG…SSIP), and 1103 to 1175 (GHAD…VSEQ). Polar residues-rich tracts occupy residues 719–734 (AQLQQTSSVPTGLASS) and 830–839 (MTSSPVTTAS). Over residues 849-870 (SGTATSTGSAPSSSTLPAASSL) the composition is skewed to low complexity. Polar residues predominate over residues 871–891 (KTPGTSANMNGPISRTSSSIP). Positions 1119–1131 (DESDEDRVGDEQE) are enriched in acidic residues. Residues Ser1121 and Ser1254 each carry the phosphoserine modification. A PHD-type; atypical zinc finger spans residues 1332–1369 (PSKCYCRLKAMIMCKGCGAFCHDDCIGPSKLCVSCLVV).

The protein belongs to the Asx family. In terms of assembly, core component of the polycomb repressive deubiquitinase (PR-DUB) complex, at least composed of BAP1, one of ASXL1, ASXL2 or (probably) ASXL3, and one of MBD5 or MBD6. Distinct combinations of ASXL and MBD proteins may preferentially bind specific histone modification marks. The PR-DUB core associates with a number of accessory proteins, including FOXK1, FOXK2, KDM1B, HCFC1 and OGT; KDM1B specifically associates with ASXL2 PR-DUB complexes. Interacts (via PHD domain) with MBD5 and MBD6 (via MBD domain); the interaction is probably direct and mediates association of MBD proteins with the PR-DUB core. Interacts with PPARA and PPARG.

It is found in the nucleus. Putative Polycomb group (PcG) protein. PcG proteins act by forming multiprotein complexes, which are required to maintain the transcriptionally repressive state of homeotic genes throughout development. PcG proteins are not required to initiate repression, but to maintain it during later stages of development. They probably act via methylation of histones, rendering chromatin heritably changed in its expressibility. Involved in transcriptional regulation mediated by ligand-bound nuclear hormone receptors, such as peroxisome proliferator-activated receptor gamma (PPARG). Acts as a coactivator for PPARG and enhances its adipocyte differentiation-inducing activity; the function seems to involve differential recruitment of acetylated and methylated histone H3. Non-catalytic component of the PR-DUB complex, a complex that specifically mediates deubiquitination of histone H2A monoubiquitinated at 'Lys-119' (H2AK119ub1). The PR-DUB complex is an epigenetic regulator of gene expression and acts as a transcriptional coactivator, affecting genes involved in development, cell communication, signaling, cell proliferation and cell viability. ASXL1, ASXL2 and ASXL3 function redundantly in the PR-DUB complex. The ASXL proteins are essential for chromatin recruitment and transcriptional activation of associated genes. ASXL1 and ASXL2 are important for BAP1 protein stability. This chain is Putative Polycomb group protein ASXL2 (Asxl2), found in Mus musculus (Mouse).